Here is a 493-residue protein sequence, read N- to C-terminus: GTPase Der (493 aa).

In terms of domain architecture, EngA-type G 1 spans 3–166; sequence PVIALVGRPN…EALGIFPKDN (164 aa). GTP is bound by residues 9–16, 56–60, and 118–121; these read GRPNVGKS, DTGGI, and NKVD. Positions 166 to 195 are disordered; it reads NAEEEGEGEPASEEVAEGEEPTRIPGPSEK. The span at 167-184 shows a compositional bias: acidic residues; sequence AEEEGEGEPASEEVAEGE. In terms of domain architecture, EngA-type G 2 spans 198-371; sequence IKIAIIGRPN…SVQESFRSAV (174 aa). GTP-binding positions include 204 to 211, 251 to 255, and 316 to 319; these read GRPNVGKS, DTAGV, and NKWD. Positions 372–456 constitute a KH-like domain; the sequence is TRWPTSRLTS…PIRIEYKGGE (85 aa). Over residues 454 to 463 the composition is skewed to basic and acidic residues; that stretch reads GGENPYEGKK. Positions 454-493 are disordered; it reads GGENPYEGKKNSLTARQVNKKRRLMSHHKKAEKKKKDKRR. A compositionally biased stretch (basic residues) spans 471-493; sequence VNKKRRLMSHHKKAEKKKKDKRR.

This sequence belongs to the TRAFAC class TrmE-Era-EngA-EngB-Septin-like GTPase superfamily. EngA (Der) GTPase family. As to quaternary structure, associates with the 50S ribosomal subunit.

In terms of biological role, GTPase that plays an essential role in the late steps of ribosome biogenesis. This chain is GTPase Der, found in Pseudomonas aeruginosa (strain ATCC 15692 / DSM 22644 / CIP 104116 / JCM 14847 / LMG 12228 / 1C / PRS 101 / PAO1).